Reading from the N-terminus, the 224-residue chain is Pyridoxal 5'-phosphate synthase subunit SNO1 (224 aa).

67–69 (GES) lines the L-glutamine pocket. Cys-100 serves as the catalytic Nucleophile. Residues Arg-129 and 160-161 (IR) each bind L-glutamine. Catalysis depends on charge relay system residues His-203 and Glu-205.

This sequence belongs to the glutaminase PdxT/SNO family.

The catalysed reaction is aldehydo-D-ribose 5-phosphate + D-glyceraldehyde 3-phosphate + L-glutamine = pyridoxal 5'-phosphate + L-glutamate + phosphate + 3 H2O + H(+). It carries out the reaction L-glutamine + H2O = L-glutamate + NH4(+). The protein operates within cofactor biosynthesis; pyridoxal 5'-phosphate biosynthesis. In terms of biological role, catalyzes the hydrolysis of glutamine to glutamate and ammonia as part of the biosynthesis of pyridoxal 5'-phosphate. The resulting ammonia molecule is channeled to the active site of a SNZ isoform. In Saccharomyces cerevisiae (strain ATCC 204508 / S288c) (Baker's yeast), this protein is Pyridoxal 5'-phosphate synthase subunit SNO1 (SNO1).